We begin with the raw amino-acid sequence, 354 residues long: Ferrochelatase (354 aa).

Positions 214 and 295 each coordinate Fe cation.

The protein belongs to the ferrochelatase family.

It is found in the cytoplasm. The catalysed reaction is heme b + 2 H(+) = protoporphyrin IX + Fe(2+). Its pathway is porphyrin-containing compound metabolism; protoheme biosynthesis; protoheme from protoporphyrin-IX: step 1/1. In terms of biological role, catalyzes the ferrous insertion into protoporphyrin IX. The chain is Ferrochelatase from Burkholderia orbicola (strain AU 1054).